The following is a 660-amino-acid chain: Bifunctional polymyxin resistance protein ArnA (660 aa).

Residues 1–304 (MKTVVFAYHD…TLGLVQGSRL (304 aa)) form a formyltransferase ArnAFT region. A (6R)-10-formyltetrahydrofolate-binding site is contributed by 86-88 (HLI). Catalysis depends on histidine 104, which acts as the Proton donor; for formyltransferase activity. (6R)-10-formyltetrahydrofolate contacts are provided by residues arginine 114 and 136–140 (VTRAD). Positions 314–660 (RRTRVLILGV…RTVDLTDKPS (347 aa)) are dehydrogenase ArnADH. NAD(+)-binding positions include aspartate 347 and 368–369 (DI). UDP-alpha-D-glucuronate-binding positions include alanine 393, tyrosine 398, and 432 to 433 (TS). The active-site Proton acceptor; for decarboxylase activity is glutamate 434. Residues arginine 460, asparagine 492, 526–535 (KLIDGGKQKR), and tyrosine 613 contribute to the UDP-alpha-D-glucuronate site. Arginine 619 (proton donor; for decarboxylase activity) is an active-site residue.

It in the N-terminal section; belongs to the Fmt family. UDP-L-Ara4N formyltransferase subfamily. The protein in the C-terminal section; belongs to the NAD(P)-dependent epimerase/dehydratase family. UDP-glucuronic acid decarboxylase subfamily. Homohexamer, formed by a dimer of trimers.

It catalyses the reaction UDP-alpha-D-glucuronate + NAD(+) = UDP-beta-L-threo-pentopyranos-4-ulose + CO2 + NADH. It carries out the reaction UDP-4-amino-4-deoxy-beta-L-arabinose + (6R)-10-formyltetrahydrofolate = UDP-4-deoxy-4-formamido-beta-L-arabinose + (6S)-5,6,7,8-tetrahydrofolate + H(+). Its pathway is nucleotide-sugar biosynthesis; UDP-4-deoxy-4-formamido-beta-L-arabinose biosynthesis; UDP-4-deoxy-4-formamido-beta-L-arabinose from UDP-alpha-D-glucuronate: step 1/3. The protein operates within nucleotide-sugar biosynthesis; UDP-4-deoxy-4-formamido-beta-L-arabinose biosynthesis; UDP-4-deoxy-4-formamido-beta-L-arabinose from UDP-alpha-D-glucuronate: step 3/3. It participates in bacterial outer membrane biogenesis; lipopolysaccharide biosynthesis. Bifunctional enzyme that catalyzes the oxidative decarboxylation of UDP-glucuronic acid (UDP-GlcUA) to UDP-4-keto-arabinose (UDP-Ara4O) and the addition of a formyl group to UDP-4-amino-4-deoxy-L-arabinose (UDP-L-Ara4N) to form UDP-L-4-formamido-arabinose (UDP-L-Ara4FN). The modified arabinose is attached to lipid A and is required for resistance to polymyxin and cationic antimicrobial peptides. This Shigella dysenteriae serotype 1 (strain Sd197) protein is Bifunctional polymyxin resistance protein ArnA.